A 141-amino-acid chain; its full sequence is Acetyltransferase YpeA (141 aa).

One can recognise an N-acetyltransferase domain in the interval 1-141 (MEIRVFRQED…GKRLIEDEEY (141 aa)).

This sequence belongs to the acetyltransferase family. YpeA subfamily.

The chain is Acetyltransferase YpeA from Shigella boydii serotype 4 (strain Sb227).